A 271-amino-acid chain; its full sequence is Dermonecrotic toxin SpeSicTox-betaIF1 (271 aa).

Histidine 3 is a catalytic residue. Mg(2+) contacts are provided by glutamate 23 and aspartate 25. The Nucleophile role is filled by histidine 39. Cystine bridges form between cysteine 43/cysteine 49 and cysteine 45/cysteine 188. Aspartate 83 serves as a coordination point for Mg(2+).

Belongs to the arthropod phospholipase D family. Class II subfamily. Mg(2+) is required as a cofactor. As to expression, expressed by the venom gland.

The protein resides in the secreted. It catalyses the reaction an N-(acyl)-sphingosylphosphocholine = an N-(acyl)-sphingosyl-1,3-cyclic phosphate + choline. The catalysed reaction is an N-(acyl)-sphingosylphosphoethanolamine = an N-(acyl)-sphingosyl-1,3-cyclic phosphate + ethanolamine. It carries out the reaction a 1-acyl-sn-glycero-3-phosphocholine = a 1-acyl-sn-glycero-2,3-cyclic phosphate + choline. The enzyme catalyses a 1-acyl-sn-glycero-3-phosphoethanolamine = a 1-acyl-sn-glycero-2,3-cyclic phosphate + ethanolamine. Dermonecrotic toxins cleave the phosphodiester linkage between the phosphate and headgroup of certain phospholipids (sphingolipid and lysolipid substrates), forming an alcohol (often choline) and a cyclic phosphate. This toxin acts on sphingomyelin (SM). It may also act on ceramide phosphoethanolamine (CPE), lysophosphatidylcholine (LPC) and lysophosphatidylethanolamine (LPE), but not on lysophosphatidylserine (LPS), and lysophosphatidylglycerol (LPG). It acts by transphosphatidylation, releasing exclusively cyclic phosphate products as second products. Induces dermonecrosis, hemolysis, increased vascular permeability, edema, inflammatory response, and platelet aggregation. The polypeptide is Dermonecrotic toxin SpeSicTox-betaIF1 (Sicarius peruensis (Six-eyed sand spider)).